Consider the following 490-residue polypeptide: B3 domain-containing protein REM14 (490 aa).

3 DNA-binding regions (TF-B3) span residues 3-95 (NQHF…LGPS), 130-226 (CFSA…LPKG), and 236-333 (CFVA…LSNE). A disordered region spans residues 343–367 (NEVESLSTDQESHEESSHNEKISRR). The segment covering 352–364 (QESHEESSHNEKI) has biased composition (basic and acidic residues). Residues 387 to 484 (FVTLNLTPYN…TSCVLKFCSK (98 aa)) constitute a DNA-binding region (TF-B3 4).

Its subcellular location is the nucleus. This is B3 domain-containing protein REM14 (REM14) from Arabidopsis thaliana (Mouse-ear cress).